The primary structure comprises 344 residues: DNA-directed RNA polymerase subunit alpha (344 aa).

Residues 1 to 238 (MKVIKTAPLI…KQLGVFGERP (238 aa)) are alpha N-terminal domain (alpha-NTD). An alpha C-terminal domain (alpha-CTD) region spans residues 254–344 (AKDLSAKIES…EKLEDKGGND (91 aa)).

The protein belongs to the RNA polymerase alpha chain family. Homodimer. The RNAP catalytic core consists of 2 alpha, 1 beta, 1 beta' and 1 omega subunit. When a sigma factor is associated with the core the holoenzyme is formed, which can initiate transcription.

The catalysed reaction is RNA(n) + a ribonucleoside 5'-triphosphate = RNA(n+1) + diphosphate. DNA-dependent RNA polymerase catalyzes the transcription of DNA into RNA using the four ribonucleoside triphosphates as substrates. The chain is DNA-directed RNA polymerase subunit alpha from Helicobacter pylori (strain ATCC 700392 / 26695) (Campylobacter pylori).